The sequence spans 539 residues: O-phosphoserine--tRNA(Cys) ligase (539 aa).

Substrate is bound by residues 188–190 (HMT), 233–235 (SAS), 275–276 (YY), and asparagine 319.

This sequence belongs to the class-II aminoacyl-tRNA synthetase family. O-phosphoseryl-tRNA(Cys) synthetase subfamily. Homotetramer. Interacts with SepCysS.

The catalysed reaction is tRNA(Cys) + O-phospho-L-serine + ATP = O-phospho-L-seryl-tRNA(Cys) + AMP + diphosphate. Catalyzes the attachment of O-phosphoserine (Sep) to tRNA(Cys). In Methanocaldococcus jannaschii (strain ATCC 43067 / DSM 2661 / JAL-1 / JCM 10045 / NBRC 100440) (Methanococcus jannaschii), this protein is O-phosphoserine--tRNA(Cys) ligase (sepS).